The following is a 202-amino-acid chain: Ion-translocating oxidoreductase complex subunit G (202 aa).

The helical transmembrane segment at 11–31 (ACLMGFFSFFSLSSVIFVKNI) threads the bilayer. FMN phosphoryl threonine is present on T176.

It belongs to the RnfG family. The complex is composed of six subunits: RnfA, RnfB, RnfC, RnfD, RnfE and RnfG. The cofactor is FMN.

The protein localises to the cell inner membrane. Functionally, part of a membrane-bound complex that couples electron transfer with translocation of ions across the membrane. This chain is Ion-translocating oxidoreductase complex subunit G, found in Buchnera aphidicola subsp. Schizaphis graminum (strain Sg).